Here is a 379-residue protein sequence, read N- to C-terminus: Stimulator of interferon genes protein (379 aa).

The Cytoplasmic portion of the chain corresponds to 1 to 17; it reads MPHSSLHPSIPCPRGHG. The segment at 1 to 190 is mediates interaction with ZDHHC1 and ZDHHC11; that stretch reads MPHSSLHPSI…TYNQHYNNLL (190 aa). Residues 18-34 traverse the membrane as a helical segment; sequence AQKAALVLLSACLVTLW. Lysine 20 is covalently cross-linked (Glycyl lysine isopeptide (Lys-Gly) (interchain with G-Cter in ubiquitin)). At 35–44 the chain is on the lumenal side; sequence GLGEPPEHTL. A helical membrane pass occupies residues 45–69; the sequence is RYLVLHLASLQLGLLLNGVCSLAEE. At 70-91 the chain is on the cytoplasmic side; it reads LRHIHSRYRGSYWRTVRACLGC. S-palmitoyl cysteine attachment occurs at residues cysteine 88 and cysteine 91. A helical transmembrane segment spans residues 92-106; that stretch reads PLRRGALLLLSIYFY. Residues 107-116 are Lumenal-facing; the sequence is YSLPNAVGPP. Residues 117–134 traverse the membrane as a helical segment; that stretch reads FTWMLALLGLSQALNILL. Over 135 to 379 the chain is Cytoplasmic; that stretch reads GLKGLAPAEI…KPLPLRTDFS (245 aa). A Glycyl lysine isopeptide (Lys-Gly) (interchain with G-Cter in ubiquitin) cross-link involves residue lysine 150. The tract at residues 153–340 is cyclic dinucleotide-binding domain (CBD); that stretch reads FNVAHGLAWS…RHLRQEEKEE (188 aa). 2',3'-cGAMP contacts are provided by serine 162 and tyrosine 167. 3',3'-c-di-GMP-binding residues include serine 162 and tyrosine 167. A 2',3'-cUAMP-binding site is contributed by tyrosine 167. The residue at position 229 (threonine 229) is a Phosphothreonine. A Glycyl lysine isopeptide (Lys-Gly) (interchain with G-Cter in ubiquitin) cross-link involves residue lysine 236. Arginine 238 is a 2',3'-cGAMP binding site. Position 238 (arginine 238) interacts with 2',3'-cUAMP. 3',3'-c-di-GMP-binding positions include 238-241 and threonine 263; that span reads RVYS. Serine 241 is subject to Phosphoserine. Threonine 263 lines the 2',3'-cGAMP pocket. Threonine 263 serves as a coordination point for 2',3'-cUAMP. Lysine 338 participates in a covalent cross-link: Glycyl lysine isopeptide (Lys-Gly) (interchain with G-Cter in SUMO). The tract at residues 340-379 is C-terminal tail (CTT); the sequence is EVTVGSLKTSAVPSTSTMSQEPELLISGMEKPLPLRTDFS. Residues 341 to 370 form a disordered region; that stretch reads VTVGSLKTSAVPSTSTMSQEPELLISGMEK. A compositionally biased stretch (polar residues) spans 345 to 359; that stretch reads SLKTSAVPSTSTMSQ. Position 354 is a phosphothreonine (threonine 354). Serine 355 is subject to Phosphoserine; by MAP3K7. Threonine 356 bears the Phosphothreonine mark. A phosphoserine; by TBK1 mark is found at serine 358 and serine 366. A pLxIS motif motif is present at residues 363 to 366; sequence LLIS.

This sequence belongs to the STING family. Homodimer; forms a homodimer in absence of cyclic nucleotide (c-di-GMP or cGAMP); 'Lys-63'-linked ubiquitination at Lys-150 is required for homodimerization. Homotetramer; in presence of cyclic nucleotide (c-di-GMP or cGAMP), forms tetramers and higher-order oligomers through side-by-side packing. Interacts (when phosphorylated) with IRF3; following activation and phosphorylation on the pLxIS motif by TBK1, recruits IRF3. Interacts with RIGI, MAVS and SSR2. Interacts with RNF5 and TRIM56. Interacts with TBK1; when homodimer, leading to subsequent production of IFN-beta. Interacts with IFIT1 and IFIT2. Interacts with TRIM29; this interaction induces STING1 ubiquitination and subsequent degradation. Associates with the MHC-II complex. Interacts with STEEP1; interaction takes place upon cGAMP-activation and STING1 phosphorylation by MAP3K7/TAK1 and promotes STING1 translocation to COPII vesicles. Interacts with SEC24A, SEC24B, and SEC24C; promoting translocation to COPII vesicles. Interacts (when ubiquitinated) with SQSTM1; leading to relocalization to autophagosomes. Interacts with SURF4. Interacts with HNRNPA2B1. Interacts with ZDHHC1; ZDHHC1 constitutively interacts with STING1 and in presence of DNA viruses activates it by promoting its cGAMP-induced oligomerization and the recruitment of downstream signaling components. Interacts with ZDHHC11; in presence of DNA viruses promotes the recruitment of IRF3 to STING1. Interacts with TOMM70. Interacts with isoform IFI16-beta of IFI16. Interacts with TAB1; promoting recruitment of TAB1 to the endoplasmic reticulum membrane and subsequent activation of MAP3K7/TAK1. Interacts (via transmembrane domain) with TMEM203. Interacts with DDX41. Interacts with TMEM120A (via C-terminal domain); regulates the trafficking of STING1 from the ER to the ER-Golgi intermediate compartment to elicit antiviral effects. In terms of assembly, (Microbial infection) Interacts with human papillomavirus (HPV) protein E7. As to quaternary structure, (Microbial infection) Interacts with adenovirus early E1A protein. (Microbial infection) Interacts with herpes simplex virus 1 protein ICP34.5; this interaction inhibits the intracellular DNA sensing pathway. In terms of assembly, (Microbial infection) Interacts with Chikungunya virus non-structural protein 1; this interaction results in inhibition of cGAS-STING signaling and increased levels of palmitoylated nsP1 and protein stabilization. As to quaternary structure, (Microbial infection) Interacts with human cytomegalovirus proteins UL94, UL42 and UL138; these interactions result in the inhibition of cGAS-STING signaling. (Microbial infection) Interacts with varivella virus protein 39; this interaction results in the inhibition of cGAS-STING signaling. Phosphorylation by TBK1 leads to activation and production of IFN-beta. Following cyclic nucleotide (c-di-GMP or cGAMP)-binding, activation and translocation from the endoplasmic reticulum, STING1 is phosphorylated by TBK1 at Ser-366 in the pLxIS motif. The phosphorylated pLxIS motif constitutes an IRF3-binding motif, leading to recruitment of the transcription factor IRF3 to induce type-I interferons and other cytokines. The phosphorylated pLxIS motif facilitates SENP2 recruitment during late phase of viral infection. Phosphorylated on tyrosine residues upon MHC-II aggregation. Dephosphorylation by PPP6C leads to inactivation and decreased production of IFN-beta. Phosphorylation at Ser-358 is also required to activate IRF3. Phosphorylation at Ser-355 by MAP3K7/TAK1 facilitates its interaction with STEEP1, promoting STING1 translocation to COPII vesicles. In terms of processing, ubiquitinated. Ubiquitinated via 'Lys-63'-linked ubiquitin chains in response to double-stranded DNA treatment, leading to relocalization to autophagosomes and subsequent degradation; this process is dependent on SQSTM1. 'Lys-63'-linked ubiquitination mediated by TRIM56 at Lys-150 promotes homodimerization and recruitment of the antiviral kinase TBK1 and subsequent production of IFN-beta. 'Lys-48'-linked polyubiquitination at Lys-150 occurring after viral infection is mediated by RNF5 and leads to proteasomal degradation. 'Lys-11'-linked polyubiquitination at Lys-150 by RNF26 leads to stabilize STING1: it protects STING1 from RNF5-mediated 'Lys-48'-linked polyubiquitination. 'Lys-33'-linked and 'Lys-48'-linked deubiquitinated by USP20; leading to its stabilization and promotion of innate antiviral response. 'Lys-48'-linked deubiquitinated by USP44; leading to its stabilization and promotion of innate antiviral response. Deubiquitinated by USP13; leading to inhibition of innate antiviral response. 'Lys-63'-linked deubiquitinated by USP49; leading to inhibition of the subsequent recruitment of TBK1 to the signaling complex. 'Lys-63'-linked ubiquitination mediated by RNF39 promotes the activation of the cGAS-STING pathway. MARCHF5-mediated ubiquitination prevents the oxidation-induced polymer formation. Post-translationally, (Microbial infection) Deubiquitinated by Epstein-Barr virus BPLF1 on both 'Lys-48' and 'Lys-63'-linked ubiquitin chains; leading to inhibition of cGAS-STING signaling. Sumoylated at Lys-338 by TRIM38 during the early phase of viral infection, promoting its stability by preventing its relocalization to autophagosomes and subsequent degradation. Desumoylated by SENP2 during the late phase of viral infection. In terms of processing, palmitoylation takes place in the Golgi apparatus and creates a platform for the recruitment of TBK1. As to expression, ubiquitously expressed. Expressed in skin endothelial cells, alveolar type 2 pneumocytes, bronchial epithelium and alveolar macrophages.

The protein localises to the endoplasmic reticulum membrane. The protein resides in the cytoplasm. It is found in the perinuclear region. Its subcellular location is the endoplasmic reticulum-Golgi intermediate compartment membrane. It localises to the golgi apparatus membrane. The protein localises to the cytoplasmic vesicle. The protein resides in the autophagosome membrane. It is found in the mitochondrion outer membrane. Its subcellular location is the cell membrane. It catalyses the reaction H(+)(in) = H(+)(out). Activated upon binding to the hydrolysis-resistant 2'3'-cG(s)A(s)MP, an analog of cGAMP, in which phosphodiester linkages are replaced by phosphothioate linkages. Specifically inhibited by small-molecule H-151 (N-(4-ethylphenyl)-N'-1H-indol-3-yl-urea), which covalently binds Cys-91 and prevents palmitoylation and subsequent activation of STING1. In contrast to mouse protein, not activated by anticancer molecule 5,6-dimethylxanthenone 4-acetic acid (DMXAA). Inhibited by compound 18 ([(3S,4S)-2-(4-tert-butyl-3-chlorophenyl)-3-(2,3-dihydro-1,4-benzodioxin-6-yl)-7-fluoro-1-oxo-1,2,3,4-tetrahydroisoquinolin-4-yl]acetate), a competitive inhibitor with slow dissociation kinetics and good oral bioavailability. Homooligomerization and ability to promote the production of type I interferons is activated by C53, a small benzothiazinone-like compound that binds to the transmembrane regions. in the area of the putative pore. In contrast, compound C53, directly inhibits the proton channel activity and facilitate MAP1LC3B/LC3B lipidation and autophagosome formation. In terms of biological role, facilitator of innate immune signaling that acts as a sensor of cytosolic DNA from bacteria and viruses and promotes the production of type I interferon (IFN-alpha and IFN-beta). Innate immune response is triggered in response to non-CpG double-stranded DNA from viruses and bacteria delivered to the cytoplasm. Acts by binding cyclic dinucleotides: recognizes and binds cyclic di-GMP (c-di-GMP), a second messenger produced by bacteria, cyclic UMP-AMP (2',3'-cUAMP), and cyclic GMP-AMP (cGAMP), a messenger produced by CGAS in response to DNA virus in the cytosol. Upon binding to c-di-GMP, cUAMP or cGAMP, STING1 oligomerizes, translocates from the endoplasmic reticulum and is phosphorylated by TBK1 on the pLxIS motif, leading to recruitment and subsequent activation of the transcription factor IRF3 to induce expression of type I interferon and exert a potent anti-viral state. Exhibits 2',3' phosphodiester linkage-specific ligand recognition: can bind both 2'-3' linked cGAMP (2'-3'-cGAMP) and 3'-3' linked cGAMP but is preferentially activated by 2'-3' linked cGAMP. The preference for 2'-3'-cGAMP, compared to other linkage isomers is probably due to the ligand itself, whichs adopts an organized free-ligand conformation that resembles the STING1-bound conformation and pays low energy costs in changing into the active conformation. In addition to promote the production of type I interferons, plays a direct role in autophagy. Following cGAMP-binding, STING1 buds from the endoplasmic reticulum into COPII vesicles, which then form the endoplasmic reticulum-Golgi intermediate compartment (ERGIC). The ERGIC serves as the membrane source for WIPI2 recruitment and LC3 lipidation, leading to formation of autophagosomes that target cytosolic DNA or DNA viruses for degradation by the lysosome. Promotes autophagy by acting as a proton channel that directs proton efflux from the Golgi to facilitate MAP1LC3B/LC3B lipidation. The autophagy- and interferon-inducing activities can be uncoupled and autophagy induction is independent of TBK1 phosphorylation. Autophagy is also triggered upon infection by bacteria: following c-di-GMP-binding, which is produced by live Gram-positive bacteria, promotes reticulophagy. May be involved in translocon function, the translocon possibly being able to influence the induction of type I interferons. May be involved in transduction of apoptotic signals via its association with the major histocompatibility complex class II (MHC-II). Its function is as follows. (Microbial infection) Antiviral activity is antagonized by oncoproteins, such as papillomavirus (HPV) protein E7 and adenovirus early E1A protein. Such oncoproteins prevent the ability to sense cytosolic DNA. This chain is Stimulator of interferon genes protein, found in Homo sapiens (Human).